A 127-amino-acid chain; its full sequence is Aspartate 1-decarboxylase (127 aa).

Residue Ser25 is the Schiff-base intermediate with substrate; via pyruvic acid of the active site. A Pyruvic acid (Ser) modification is found at Ser25. Thr57 is a binding site for substrate. Tyr58 functions as the Proton donor in the catalytic mechanism. 73–75 (GAA) contacts substrate.

It belongs to the PanD family. In terms of assembly, heterooctamer of four alpha and four beta subunits. Pyruvate is required as a cofactor. Is synthesized initially as an inactive proenzyme, which is activated by self-cleavage at a specific serine bond to produce a beta-subunit with a hydroxyl group at its C-terminus and an alpha-subunit with a pyruvoyl group at its N-terminus.

Its subcellular location is the cytoplasm. It carries out the reaction L-aspartate + H(+) = beta-alanine + CO2. It participates in cofactor biosynthesis; (R)-pantothenate biosynthesis; beta-alanine from L-aspartate: step 1/1. In terms of biological role, catalyzes the pyruvoyl-dependent decarboxylation of aspartate to produce beta-alanine. This chain is Aspartate 1-decarboxylase, found in Listeria welshimeri serovar 6b (strain ATCC 35897 / DSM 20650 / CCUG 15529 / CIP 8149 / NCTC 11857 / SLCC 5334 / V8).